Consider the following 91-residue polypeptide: Small ribosomal subunit protein bS18 (91 aa).

It belongs to the bacterial ribosomal protein bS18 family. Part of the 30S ribosomal subunit. Forms a tight heterodimer with protein bS6.

Binds as a heterodimer with protein bS6 to the central domain of the 16S rRNA, where it helps stabilize the platform of the 30S subunit. The protein is Small ribosomal subunit protein bS18 of Wolbachia pipientis wMel.